Consider the following 1877-residue polypeptide: Proprotein convertase subtilisin/kexin type 5 (1877 aa).

Positions 1 to 34 (MDWDWGNRCSRPGRRDLLCVLALLAGCLLPVCRT) are cleaved as a signal peptide. Residues 35-116 (RVYTNHWAVK…QQVVKKRTKR (82 aa)) constitute a propeptide that is removed on maturation. The Extracellular portion of the chain corresponds to 117–1768 (DYDLSHAQST…EAEFYEHTKT (1652 aa)). Residues 136-455 (MWYMHCSDNT…FGLMDAEAMV (320 aa)) enclose the Peptidase S8 domain. Catalysis depends on charge relay system residues Asp173 and His214. N-linked (GlcNAc...) asparagine glycosylation is found at Asn227 and Asn383. Ser388 acts as the Charge relay system in catalysis. A P/Homo B domain is found at 463 to 603 (TVPQQHVCVE…SLVLYGTSVQ (141 aa)). Positions 521–523 (RGD) match the Cell attachment site motif. FU repeat units lie at residues 632 to 682 (EDYA…GHYH), 685 to 732 (KKRC…GSYE), 736 to 779 (KNVC…GQFF), 781 to 826 (GHDC…SYYL), 834 to 881 (YKSC…GEYI), 884 to 929 (QGHC…WKFE), 931 to 981 (KKQC…GHYP), 984 to 1030 (GHAC…GEFQ), 1034 to 1079 (YEEC…KTFG), 1081 to 1123 (KWEC…GFHG), 1127 to 1168 (LGEC…STWP), 1206 to 1248 (TSQN…GTWP), 1252 to 1299 (SGSC…GFYA), 1301 to 1345 (DGVC…KHVA), 1347 to 1390 (EGVC…SFYP), 1392 to 1438 (MRQC…GTYK), 1442 to 1487 (NDEC…VEYW), 1491 to 1536 (SHRC…GYHT), 1540 to 1585 (SQQC…GYYG), 1589 to 1636 (SGRC…HYYA), 1640 to 1685 (AQTC…GEYR), and 1691 to 1738 (NFNC…SHSR). The interval 638-1753 (CDPECSEVGC…CDCQSSTDEC (1116 aa)) is CRM (Cys-rich motif). An N-linked (GlcNAc...) asparagine glycan is attached at Asn667. N-linked (GlcNAc...) asparagine glycosylation is found at Asn754, Asn804, and Asn854. N-linked (GlcNAc...) asparagine glycans are attached at residues Asn951 and Asn1016. An N-linked (GlcNAc...) asparagine glycan is attached at Asn1220. The N-linked (GlcNAc...) asparagine glycan is linked to Asn1317. N-linked (GlcNAc...) asparagine glycosylation occurs at Asn1523. N-linked (GlcNAc...) asparagine glycosylation is found at Asn1711 and Asn1733. A helical membrane pass occupies residues 1769–1789 (ALLVTSGAMLLLLLGAAAVVW). Residues 1790-1877 (RKSRSRPVAK…EYDDESYSYQ (88 aa)) lie on the Cytoplasmic side of the membrane. 2 AC regions span residues 1825-1844 (VIEY…IVYM) and 1856-1877 (YGLL…YSYQ).

The protein belongs to the peptidase S8 family. As to expression, PC5A is expressed in most tissues but is most abundant in the intestine and adrenals. PC5B is expressed in the intestine, adrenals and lung but not in the brain.

The protein localises to the secreted. Its subcellular location is the endomembrane system. Serine endoprotease that processes various proproteins by cleavage at paired basic amino acids, recognizing the RXXX[KR]R consensus motif. Likely functions in the constitutive and regulated secretory pathways. Plays an essential role in pregnancy establishment by proteolytic activation of a number of important factors such as BMP2, CALD1 and alpha-integrins. May be responsible for the maturation of gastrointestinal peptides. May be involved in the cellular proliferation of adrenal cortex via the activation of growth factors. This Mus musculus (Mouse) protein is Proprotein convertase subtilisin/kexin type 5 (Pcsk5).